A 354-amino-acid chain; its full sequence is UDP-N-acetylglucosamine--N-acetylmuramyl-(pentapeptide) pyrophosphoryl-undecaprenol N-acetylglucosamine transferase (354 aa).

UDP-N-acetyl-alpha-D-glucosamine contacts are provided by residues 11–13, R164, S194, and Q289; that span reads TAG.

Belongs to the glycosyltransferase 28 family. MurG subfamily.

The protein localises to the cell membrane. It carries out the reaction di-trans,octa-cis-undecaprenyl diphospho-N-acetyl-alpha-D-muramoyl-L-alanyl-D-glutamyl-meso-2,6-diaminopimeloyl-D-alanyl-D-alanine + UDP-N-acetyl-alpha-D-glucosamine = di-trans,octa-cis-undecaprenyl diphospho-[N-acetyl-alpha-D-glucosaminyl-(1-&gt;4)]-N-acetyl-alpha-D-muramoyl-L-alanyl-D-glutamyl-meso-2,6-diaminopimeloyl-D-alanyl-D-alanine + UDP + H(+). The protein operates within cell wall biogenesis; peptidoglycan biosynthesis. In terms of biological role, cell wall formation. Catalyzes the transfer of a GlcNAc subunit on undecaprenyl-pyrophosphoryl-MurNAc-pentapeptide (lipid intermediate I) to form undecaprenyl-pyrophosphoryl-MurNAc-(pentapeptide)GlcNAc (lipid intermediate II). This Clostridium botulinum (strain 657 / Type Ba4) protein is UDP-N-acetylglucosamine--N-acetylmuramyl-(pentapeptide) pyrophosphoryl-undecaprenol N-acetylglucosamine transferase.